A 354-amino-acid chain; its full sequence is AT-hook motif nuclear-localized protein 11 (354 aa).

Disordered stretches follow at residues 1–158 and 290–354; these read MDRR…MMPS and KREE…LMRG. Low complexity-rich tracts occupy residues 46 to 55 and 75 to 96; these read NSISPFGSNP and VDSSPADSSAAAAGALVAPPSG. The Bipartite nuclear localization signal signature appears at 101 to 109; that stretch reads KRKRGRPRK. Residues 101–113 constitute a DNA-binding region (a.T hook 1); that stretch reads KRKRGRPRKYGQD. Over residues 122-133 the composition is skewed to low complexity; it reads SPSISNVSPNSN. The segment at residues 134–146 is a DNA-binding region (a.T hook 2); the sequence is KRGRGRPPGSGKK. In terms of domain architecture, PPC spans 159–302; it reads STGMSFTPHV…ETSEDVQDTD (144 aa). Residues 294–303 show a composition bias toward acidic residues; the sequence is TSEDVQDTDA. Residues 304–327 are compositionally biased toward polar residues; the sequence is LENNNDNTAATSPPVPQQSQNIVQ. Positions 340–354 are enriched in basic and acidic residues; the sequence is MDMHHPHMDIDLMRG.

It is found in the nucleus. Functionally, transcription factor that specifically binds AT-rich DNA sequences related to the nuclear matrix attachment regions (MARs). This is AT-hook motif nuclear-localized protein 11 from Arabidopsis thaliana (Mouse-ear cress).